The following is a 302-amino-acid chain: ATP synthase gamma chain (302 aa).

Belongs to the ATPase gamma chain family. F-type ATPases have 2 components, CF(1) - the catalytic core - and CF(0) - the membrane proton channel. CF(1) has five subunits: alpha(3), beta(3), gamma(1), delta(1), epsilon(1). CF(0) has three main subunits: a, b and c.

Its subcellular location is the cell inner membrane. Functionally, produces ATP from ADP in the presence of a proton gradient across the membrane. The gamma chain is believed to be important in regulating ATPase activity and the flow of protons through the CF(0) complex. This chain is ATP synthase gamma chain, found in Bartonella bacilliformis (strain ATCC 35685 / KC583 / Herrer 020/F12,63).